We begin with the raw amino-acid sequence, 312 residues long: Probable phytanoyl-CoA dioxygenase (312 aa).

2-oxoglutarate contacts are provided by residues lysine 84, methionine 124, 142–144 (HQD), and tryptophan 160. Residues histidine 142 and aspartate 144 each coordinate Fe cation. Residue histidine 231 coordinates Fe cation. 2-oxoglutarate is bound by residues serine 233 and arginine 242.

It belongs to the PhyH family. Fe cation serves as cofactor. Requires L-ascorbate as cofactor.

It catalyses the reaction phytanoyl-CoA + 2-oxoglutarate + O2 = 2-hydroxyphytanoyl-CoA + succinate + CO2. It functions in the pathway lipid metabolism; fatty acid metabolism. Converts phytanoyl-CoA to 2-hydroxyphytanoyl-CoA. This is Probable phytanoyl-CoA dioxygenase from Caenorhabditis elegans.